An 88-amino-acid polypeptide reads, in one-letter code: Large ribosomal subunit protein bL27 (88 aa).

Residues 1–25 are disordered; the sequence is MAHKKGASSSSNGRDSEAKRLGVKR.

This sequence belongs to the bacterial ribosomal protein bL27 family.

This chain is Large ribosomal subunit protein bL27, found in Corynebacterium diphtheriae (strain ATCC 700971 / NCTC 13129 / Biotype gravis).